Here is a 495-residue protein sequence, read N- to C-terminus: L-2,4-diaminobutyrate decarboxylase (495 aa).

An N6-(pyridoxal phosphate)lysine modification is found at Lys-312.

Belongs to the group II decarboxylase family. Pyridoxal 5'-phosphate serves as cofactor.

The catalysed reaction is L-2,4-diaminobutanoate + H(+) = propane-1,3-diamine + CO2. The protein operates within siderophore biosynthesis; rhizobactin biosynthesis. This chain is L-2,4-diaminobutyrate decarboxylase (rhbB), found in Rhizobium meliloti (strain 1021) (Ensifer meliloti).